A 473-amino-acid polypeptide reads, in one-letter code: 23S rRNA (uracil(1939)-C(5))-methyltransferase RlmD (473 aa).

The tract at residues 6 to 27 (KPSKGKNKSNVKGRVRGAGSGE) is disordered. Residues 8-20 (SKGKNKSNVKGRV) show a composition bias toward basic residues. A TRAM domain is found at 42–99 (DDINAANEAVTIDGMDWQGQGVARGDTLYFVDGALPGETVEIKALSSNKQIVNAKVTK). Residues Cys112, Cys118, Cys121, and Cys199 each coordinate [4Fe-4S] cluster. The S-adenosyl-L-methionine site is built by Gln304, Phe333, Asn338, Glu354, Asp381, and Asp402. Cys428 functions as the Nucleophile in the catalytic mechanism.

Belongs to the class I-like SAM-binding methyltransferase superfamily. RNA M5U methyltransferase family. RlmD subfamily.

The enzyme catalyses uridine(1939) in 23S rRNA + S-adenosyl-L-methionine = 5-methyluridine(1939) in 23S rRNA + S-adenosyl-L-homocysteine + H(+). In terms of biological role, catalyzes the formation of 5-methyl-uridine at position 1939 (m5U1939) in 23S rRNA. The chain is 23S rRNA (uracil(1939)-C(5))-methyltransferase RlmD from Alteromonas naphthalenivorans.